The sequence spans 265 residues: Thiazole synthase (265 aa).

Lysine 103 serves as the catalytic Schiff-base intermediate with DXP. 1-deoxy-D-xylulose 5-phosphate is bound by residues glycine 164, 190–191 (AG), and 212–213 (NT).

Belongs to the ThiG family. As to quaternary structure, homotetramer. Forms heterodimers with either ThiH or ThiS.

It is found in the cytoplasm. It carries out the reaction [ThiS sulfur-carrier protein]-C-terminal-Gly-aminoethanethioate + 2-iminoacetate + 1-deoxy-D-xylulose 5-phosphate = [ThiS sulfur-carrier protein]-C-terminal Gly-Gly + 2-[(2R,5Z)-2-carboxy-4-methylthiazol-5(2H)-ylidene]ethyl phosphate + 2 H2O + H(+). It participates in cofactor biosynthesis; thiamine diphosphate biosynthesis. Catalyzes the rearrangement of 1-deoxy-D-xylulose 5-phosphate (DXP) to produce the thiazole phosphate moiety of thiamine. Sulfur is provided by the thiocarboxylate moiety of the carrier protein ThiS. In vitro, sulfur can be provided by H(2)S. This is Thiazole synthase from Bordetella avium (strain 197N).